Reading from the N-terminus, the 254-residue chain is Sec-independent protein translocase protein TatC (254 aa).

6 consecutive transmembrane segments (helical) span residues 40–60, 82–104, 125–145, 172–192, 210–230, and 233–253; these read IFLS…FVKP, FFFV…FILY, VVLG…YALI, FVLL…IQVV, FVIL…DPLT, and LLAG…RLLG.

Belongs to the TatC family. In terms of assembly, forms a complex with TatA.

The protein localises to the cell inner membrane. Part of the twin-arginine translocation (Tat) system that transports large folded proteins containing a characteristic twin-arginine motif in their signal peptide across membranes. This Synechocystis sp. (strain ATCC 27184 / PCC 6803 / Kazusa) protein is Sec-independent protein translocase protein TatC.